A 158-amino-acid polypeptide reads, in one-letter code: NADH-quinone oxidoreductase subunit B (158 aa).

[4Fe-4S] cluster contacts are provided by Cys37, Cys38, Cys102, and Cys132.

The protein belongs to the complex I 20 kDa subunit family. In terms of assembly, NDH-1 is composed of 14 different subunits. Subunits NuoB, C, D, E, F, and G constitute the peripheral sector of the complex. [4Fe-4S] cluster is required as a cofactor.

The protein resides in the cell inner membrane. It catalyses the reaction a quinone + NADH + 5 H(+)(in) = a quinol + NAD(+) + 4 H(+)(out). Its function is as follows. NDH-1 shuttles electrons from NADH, via FMN and iron-sulfur (Fe-S) centers, to quinones in the respiratory chain. Couples the redox reaction to proton translocation (for every two electrons transferred, four hydrogen ions are translocated across the cytoplasmic membrane), and thus conserves the redox energy in a proton gradient. The sequence is that of NADH-quinone oxidoreductase subunit B from Dechloromonas aromatica (strain RCB).